The chain runs to 149 residues: Transcriptional repressor NrdR (149 aa).

Residues 3-34 (CPFCFAVDTKVIDSRLVGEGSSVRRRRQCLVC) fold into a zinc finger. The ATP-cone domain occupies 49–139 (PRVVKSNDVR…VYRSFEDIKE (91 aa)).

The protein belongs to the NrdR family. It depends on Zn(2+) as a cofactor.

Negatively regulates transcription of bacterial ribonucleotide reductase nrd genes and operons by binding to NrdR-boxes. This Shigella flexneri protein is Transcriptional repressor NrdR.